Consider the following 335-residue polypeptide: Zinc-type alcohol dehydrogenase-like protein SAV2186 (335 aa).

Belongs to the zinc-containing alcohol dehydrogenase family. Quinone oxidoreductase subfamily.

This Staphylococcus aureus (strain Mu50 / ATCC 700699) protein is Zinc-type alcohol dehydrogenase-like protein SAV2186.